A 273-amino-acid chain; its full sequence is HLA class II histocompatibility antigen, DO beta chain (273 aa).

Residues 1–26 (MGSGWVPWVVALLVNLTRLDSSMTQG) form the signal peptide. The tract at residues 27 to 120 (TDSPEDFVIQ…LGAPFTVGRK (94 aa)) is beta-1. Topologically, residues 27-224 (TDSPEDFVIQ…RAQSEYSWRK (198 aa)) are extracellular. Intrachain disulfides connect Cys41-Cys105 and Cys143-Cys199. Asn45 carries an N-linked (GlcNAc...) asparagine glycan. Positions 121–214 (VQPEVTVYPE…SLLSPVSVEW (94 aa)) are beta-2. The Ig-like C1-type domain occupies 123-213 (PEVTVYPERT…SSLLSPVSVE (91 aa)). A connecting peptide region spans residues 215–224 (RAQSEYSWRK). A helical transmembrane segment spans residues 225 to 245 (MLSGIAAFLLGLIFLLVGIVI). At 246–273 (QLRAQKGYVRTQMSGNEVSRAVLLPQSC) the chain is on the cytoplasmic side.

Belongs to the MHC class II family. In terms of assembly, heterodimer of an alpha chain (DOA) and a beta chain (DOB). Forms a heterotetrameric complex with an HLA-DM molecule during intracellular transport in endosomal/lysosomal compartments in B-cells.

The protein localises to the endosome membrane. The protein resides in the lysosome membrane. Its function is as follows. Important modulator in the HLA class II restricted antigen presentation pathway by interaction with the HLA-DM molecule in B-cells. Modifies peptide exchange activity of HLA-DM. This is HLA class II histocompatibility antigen, DO beta chain (HLA-DOB) from Homo sapiens (Human).